A 360-amino-acid chain; its full sequence is Acetylxylan esterase / glucomannan deacetylase (360 aa).

An N-terminal signal peptide occupies residues M1–A21. S151 acts as the Nucleophile in catalysis.

It belongs to the carbohydrate esterase 2 (CE2) family.

The protein resides in the secreted. The enzyme catalyses Deacetylation of xylans and xylo-oligosaccharides.. Its pathway is glycan degradation; xylan degradation. Functionally, involved in the degradation of plant cell wall polysaccharides. Catalyzes the deacetylation of acetylated birchwood xylan and glucomannan, with a large preference for the latter, and of the synthetic substrate 4-nitrophenyl acetate (4-NPAc). In Cellvibrio japonicus (strain Ueda107) (Pseudomonas fluorescens subsp. cellulosa), this protein is Acetylxylan esterase / glucomannan deacetylase.